The chain runs to 231 residues: Large ribosomal subunit protein uL1 (231 aa).

This sequence belongs to the universal ribosomal protein uL1 family. In terms of assembly, part of the 50S ribosomal subunit.

Its function is as follows. Binds directly to 23S rRNA. The L1 stalk is quite mobile in the ribosome, and is involved in E site tRNA release. Protein L1 is also a translational repressor protein, it controls the translation of the L11 operon by binding to its mRNA. The polypeptide is Large ribosomal subunit protein uL1 (Cellvibrio japonicus (strain Ueda107) (Pseudomonas fluorescens subsp. cellulosa)).